A 164-amino-acid polypeptide reads, in one-letter code: MEMTNAQRLILSNQYKMMTMLDPANAERYRRLQTIIERGYGLQMRELDREFGELKEETCRTIIDIMEMYHALHVSWSNLHDQQSIDERRVTFLGFDAATEARYLGYVRFMVNVEGRYTHFDAGTHGFNAQTPMWEKYQRMLNVWHACPRQYHLSANEINQIINA.

The protein belongs to the UPF0304 family.

The chain is UPF0304 protein YfbU from Escherichia coli O127:H6 (strain E2348/69 / EPEC).